The chain runs to 445 residues: Phosphoglucosamine mutase (445 aa).

Ser-102 functions as the Phosphoserine intermediate in the catalytic mechanism. The Mg(2+) site is built by Ser-102, Asp-241, Asp-243, and Asp-245. A Phosphoserine modification is found at Ser-102.

It belongs to the phosphohexose mutase family. The cofactor is Mg(2+). In terms of processing, activated by phosphorylation.

It catalyses the reaction alpha-D-glucosamine 1-phosphate = D-glucosamine 6-phosphate. Catalyzes the conversion of glucosamine-6-phosphate to glucosamine-1-phosphate. In Escherichia coli O7:K1 (strain IAI39 / ExPEC), this protein is Phosphoglucosamine mutase.